A 528-amino-acid chain; its full sequence is GMP synthase [glutamine-hydrolyzing] (528 aa).

Positions 13 to 203 constitute a Glutamine amidotransferase type-1 domain; the sequence is TVLVVDFGAQ…LYEAAGCRPT (191 aa). Residue Cys90 is the Nucleophile of the active site. Residues His177 and Glu179 contribute to the active site. One can recognise a GMPS ATP-PPase domain in the interval 204–402; the sequence is WTMVNIVEDQ…LGLPAEMVWR (199 aa). Residue 231-237 participates in ATP binding; that stretch reads SGGVDSA.

Homodimer.

The enzyme catalyses XMP + L-glutamine + ATP + H2O = GMP + L-glutamate + AMP + diphosphate + 2 H(+). The protein operates within purine metabolism; GMP biosynthesis; GMP from XMP (L-Gln route): step 1/1. Catalyzes the synthesis of GMP from XMP. The chain is GMP synthase [glutamine-hydrolyzing] from Thermobifida fusca (strain YX).